A 904-amino-acid chain; its full sequence is Phosphoenolpyruvate carboxylase (904 aa).

Positions 52 to 71 (ISRRESDAPPSTLSEQLTGR) are disordered. Residues H151 and K570 contribute to the active site.

This sequence belongs to the PEPCase type 1 family. The cofactor is Mg(2+).

The enzyme catalyses oxaloacetate + phosphate = phosphoenolpyruvate + hydrogencarbonate. Its function is as follows. Forms oxaloacetate, a four-carbon dicarboxylic acid source for the tricarboxylic acid cycle. This is Phosphoenolpyruvate carboxylase from Xanthomonas oryzae pv. oryzae (strain MAFF 311018).